We begin with the raw amino-acid sequence, 82 residues long: UPF0729 protein C18orf32 homolog (82 aa).

Residues 1–37 form a necessary for its localzation to the endoplasmic reticulum and lipid droplets region; the sequence is MVCIPCIVIPVLLWVYKKFLEPIVYPFISPIINRIWP. The disordered stretch occupies residues 46–82; sequence TSAKKEESNGTCKASGTSITNGSVSRGEEAVPDKKTD. Residues 54–69 are compositionally biased toward polar residues; sequence NGTCKASGTSITNGSV. The segment covering 71-82 has biased composition (basic and acidic residues); the sequence is RGEEAVPDKKTD.

Belongs to the UPF0729 family.

It is found in the endoplasmic reticulum. It localises to the lipid droplet. This Xenopus tropicalis (Western clawed frog) protein is UPF0729 protein C18orf32 homolog.